The sequence spans 676 residues: Forkhead box protein biniou (676 aa).

Disordered regions lie at residues 22 to 50 (YHDP…GHPY), 131 to 160 (AHSA…SSST), 203 to 232 (QEQA…SRIS), 249 to 312 (NYSS…PEKP), and 583 to 651 (IQHA…AYLP). The span at 34–48 (PHAHSHPHQHTHTGH) shows a compositional bias: basic residues. Positions 133–160 (SAGSASPQSNSKTPTDLPQDLQYASSST) are enriched in polar residues. The span at 203–220 (QEQAGQQQPQQLPAQQLQ) shows a compositional bias: low complexity. Residues 257–273 (PAKSLNGSESSPPSQNH) are compositionally biased toward polar residues. A DNA-binding region (fork-head) is located at residues 311–408 (KPALSYINMI…DEGSLRRRPR (98 aa)). Residues 583–593 (IQHAQAQAQAQ) are compositionally biased toward low complexity. Residues 594-611 (AHHHHHQHHASHPSHSHQ) show a composition bias toward basic residues. Residues 612 to 625 (GHGSMHQNHGTSST) are compositionally biased toward low complexity. Positions 637–647 (GIDHSPIDRKP) are enriched in basic and acidic residues.

Binds to DNA. In embryo, expressed in all types of visceral muscles and their progenitors (at protein level). In late stage 10 embryo, expressed in the caudal visceral mesoderm and trunk and hindgut visceral mesoderm progenitors.

The protein localises to the nucleus. In terms of biological role, component of a regulatory network controlling visceral mesoderm development and midgut morphogenesis. Transcriptional regulator involved in the activation of a large number of genes in the visceral mesoderm including betaTub60D, dpp and Hand. Binds to and regulates a number of enhancers driving expression in the visceral mesoderm in a temporally and spatially restricted manner. Also to binds to enhancers cooperatively with activators, such as bap or HLH54F, to coregulate expression of shared target genes in the visceral mesoderm. Binds to the Ndg enhancer and drives expression of Ndg in the late visceral musculature. May be involved in the transcriptional regulation of wupA in the visceral mesoderm. Plays an indirect role in the later stages of salivary gland positioning. The chain is Forkhead box protein biniou (bin) from Drosophila melanogaster (Fruit fly).